The chain runs to 203 residues: Imidazoleglycerol-phosphate dehydratase (203 aa).

This sequence belongs to the imidazoleglycerol-phosphate dehydratase family.

It localises to the cytoplasm. The catalysed reaction is D-erythro-1-(imidazol-4-yl)glycerol 3-phosphate = 3-(imidazol-4-yl)-2-oxopropyl phosphate + H2O. Its pathway is amino-acid biosynthesis; L-histidine biosynthesis; L-histidine from 5-phospho-alpha-D-ribose 1-diphosphate: step 6/9. The polypeptide is Imidazoleglycerol-phosphate dehydratase (Salinispora tropica (strain ATCC BAA-916 / DSM 44818 / JCM 13857 / NBRC 105044 / CNB-440)).